Reading from the N-terminus, the 183-residue chain is RNA pyrophosphohydrolase (183 aa).

The region spanning 6–149 is the Nudix hydrolase domain; the sequence is GYRPNVGIIL…KREVYRLALE (144 aa). Residues 38-59 carry the Nudix box motif; the sequence is GGINAGETPEQAMFRELEEEVG.

It belongs to the Nudix hydrolase family. RppH subfamily. A divalent metal cation is required as a cofactor.

Functionally, accelerates the degradation of transcripts by removing pyrophosphate from the 5'-end of triphosphorylated RNA, leading to a more labile monophosphorylated state that can stimulate subsequent ribonuclease cleavage. The sequence is that of RNA pyrophosphohydrolase from Thiobacillus denitrificans (strain ATCC 25259 / T1).